Reading from the N-terminus, the 119-residue chain is Dihydroneopterin aldolase (119 aa).

Substrate-binding positions include Glu-21, Tyr-53, and 72–73 (IE). Catalysis depends on Lys-99, which acts as the Proton donor/acceptor.

The protein belongs to the DHNA family.

It carries out the reaction 7,8-dihydroneopterin = 6-hydroxymethyl-7,8-dihydropterin + glycolaldehyde. It participates in cofactor biosynthesis; tetrahydrofolate biosynthesis; 2-amino-4-hydroxy-6-hydroxymethyl-7,8-dihydropteridine diphosphate from 7,8-dihydroneopterin triphosphate: step 3/4. Functionally, catalyzes the conversion of 7,8-dihydroneopterin to 6-hydroxymethyl-7,8-dihydropterin. This chain is Dihydroneopterin aldolase (folB), found in Streptococcus pyogenes serotype M1.